The chain runs to 72 residues: Translation initiation factor IF-1 (72 aa).

Positions 1–72 (MSKEDVIEVE…SRGRIVYRFK (72 aa)) constitute an S1-like domain.

This sequence belongs to the IF-1 family. As to quaternary structure, component of the 30S ribosomal translation pre-initiation complex which assembles on the 30S ribosome in the order IF-2 and IF-3, IF-1 and N-formylmethionyl-tRNA(fMet); mRNA recruitment can occur at any time during PIC assembly.

It localises to the cytoplasm. Functionally, one of the essential components for the initiation of protein synthesis. Stabilizes the binding of IF-2 and IF-3 on the 30S subunit to which N-formylmethionyl-tRNA(fMet) subsequently binds. Helps modulate mRNA selection, yielding the 30S pre-initiation complex (PIC). Upon addition of the 50S ribosomal subunit IF-1, IF-2 and IF-3 are released leaving the mature 70S translation initiation complex. The chain is Translation initiation factor IF-1 from Desulfitobacterium hafniense (strain Y51).